We begin with the raw amino-acid sequence, 120 residues long: Large ribosomal subunit protein bL19 (120 aa).

This sequence belongs to the bacterial ribosomal protein bL19 family.

This protein is located at the 30S-50S ribosomal subunit interface and may play a role in the structure and function of the aminoacyl-tRNA binding site. This chain is Large ribosomal subunit protein bL19, found in Thermosynechococcus vestitus (strain NIES-2133 / IAM M-273 / BP-1).